We begin with the raw amino-acid sequence, 1382 residues long: DNA-directed RNA polymerase subunit beta' (1382 aa).

4 residues coordinate Zn(2+): Cys-70, Cys-72, Cys-85, and Cys-88. Mg(2+) is bound by residues Asp-460, Asp-462, and Asp-464. Positions 808, 882, 889, and 892 each coordinate Zn(2+).

Belongs to the RNA polymerase beta' chain family. In terms of assembly, the RNAP catalytic core consists of 2 alpha, 1 beta, 1 beta' and 1 omega subunit. When a sigma factor is associated with the core the holoenzyme is formed, which can initiate transcription. Mg(2+) is required as a cofactor. The cofactor is Zn(2+).

The catalysed reaction is RNA(n) + a ribonucleoside 5'-triphosphate = RNA(n+1) + diphosphate. In terms of biological role, DNA-dependent RNA polymerase catalyzes the transcription of DNA into RNA using the four ribonucleoside triphosphates as substrates. This is DNA-directed RNA polymerase subunit beta' from Geobacter sp. (strain M21).